The following is an 82-amino-acid chain: Turripeptide OL139 (82 aa).

The tract at residues 58–82 (HRTTRDTADKTHGGSQRDRFFQSIA) is disordered.

In terms of processing, contains 6 disulfide bonds. Expressed by the venom duct.

It localises to the secreted. Its function is as follows. Acts as a neurotoxin by inhibiting an ion channel. The chain is Turripeptide OL139 from Iotyrris olangoensis (Sea snail).